A 596-amino-acid chain; its full sequence is SUN domain-containing protein 4 (596 aa).

The helical transmembrane segment at 28–48 (VSLSLVFLIWGLVFLSTLWIS) threads the bilayer. 2 disordered regions span residues 58–98 (LVDS…LSSD) and 139–158 (KQSE…TTGS). Residues 66-77 (EPDDERADETAE) show a composition bias toward acidic residues. 2 stretches are compositionally biased toward polar residues: residues 80-95 (DATS…NPGL) and 141-158 (SEIN…TTGS). Residues 179–343 (SNSRDKSLSG…SLLEVYGVDA (165 aa)) enclose the SUN domain. Residues 366–396 (DTEQKEKKTMQAKESFESDEDKSKQKEKEQE) show a composition bias toward basic and acidic residues. A disordered region spans residues 366-410 (DTEQKEKKTMQAKESFESDEDKSKQKEKEQEASPENAVVKDEVSL). Residues 475–544 (ASKREKEVET…LERLEWMEKK (70 aa)) adopt a coiled-coil conformation. Transmembrane regions (helical) follow at residues 545–565 (GVVV…AVVF) and 576–596 (GGLA…ILSL).

In terms of assembly, forms homomers and heteromers with SUN3. Interacts with SUN1, SUN2 and TIK.

The protein localises to the nucleus membrane. It localises to the endoplasmic reticulum membrane. Functionally, encodes a member of the mid-SUN subfamily of SUN-domain proteins that is localized to both the nuclear envelope and the ER. It is involved in early seed development and nuclear morphology. [TAIR]. The sequence is that of SUN domain-containing protein 4 from Arabidopsis thaliana (Mouse-ear cress).